The chain runs to 161 residues: MTRLLVVYFLISALLVGLDQWSKYLTVQNISLGETKEFIPGFLSLTHLRNTGAAWSLLEGKMIFFYVITVIVSVVIIYLLIKNYKKSIWYSVGLSFVLAGAIGNFIDRVRLGYVVDMLQTDFMNFPIFNVADSTLVVGVICIFIYLILDEKAAKEGKNGTN.

The next 3 membrane-spanning stretches (helical) occupy residues 4-24 (LLVV…WSKY), 61-81 (KMIF…YLLI), and 87-107 (SIWY…NFID). Catalysis depends on residues Asp-116 and Asp-132. A helical transmembrane segment spans residues 127–147 (IFNVADSTLVVGVICIFIYLI).

The protein belongs to the peptidase A8 family.

The protein localises to the cell membrane. It catalyses the reaction Release of signal peptides from bacterial membrane prolipoproteins. Hydrolyzes -Xaa-Yaa-Zaa-|-(S,diacylglyceryl)Cys-, in which Xaa is hydrophobic (preferably Leu), and Yaa (Ala or Ser) and Zaa (Gly or Ala) have small, neutral side chains.. It participates in protein modification; lipoprotein biosynthesis (signal peptide cleavage). In terms of biological role, this protein specifically catalyzes the removal of signal peptides from prolipoproteins. The chain is Lipoprotein signal peptidase from Enterococcus faecalis (strain ATCC 700802 / V583).